The sequence spans 473 residues: Siroheme synthase (473 aa).

The tract at residues 1–222 (MNTQPHHSSP…GDESRADARL (222 aa)) is precorrin-2 dehydrogenase /sirohydrochlorin ferrochelatase. NAD(+) is bound by residues 37-38 (EI) and 58-59 (EK). The tract at residues 233-473 (GEVWLVGAGP…QVVRHRVVSP (241 aa)) is uroporphyrinogen-III C-methyltransferase. P242 is a binding site for S-adenosyl-L-methionine. D265 functions as the Proton acceptor in the catalytic mechanism. K287 serves as the catalytic Proton donor. S-adenosyl-L-methionine-binding positions include 318–320 (GGD), I323, 348–349 (SA), M401, and G430.

This sequence in the N-terminal section; belongs to the precorrin-2 dehydrogenase / sirohydrochlorin ferrochelatase family. It in the C-terminal section; belongs to the precorrin methyltransferase family.

The enzyme catalyses uroporphyrinogen III + 2 S-adenosyl-L-methionine = precorrin-2 + 2 S-adenosyl-L-homocysteine + H(+). The catalysed reaction is precorrin-2 + NAD(+) = sirohydrochlorin + NADH + 2 H(+). It catalyses the reaction siroheme + 2 H(+) = sirohydrochlorin + Fe(2+). It functions in the pathway cofactor biosynthesis; adenosylcobalamin biosynthesis; precorrin-2 from uroporphyrinogen III: step 1/1. The protein operates within cofactor biosynthesis; adenosylcobalamin biosynthesis; sirohydrochlorin from precorrin-2: step 1/1. It participates in porphyrin-containing compound metabolism; siroheme biosynthesis; precorrin-2 from uroporphyrinogen III: step 1/1. Its pathway is porphyrin-containing compound metabolism; siroheme biosynthesis; siroheme from sirohydrochlorin: step 1/1. It functions in the pathway porphyrin-containing compound metabolism; siroheme biosynthesis; sirohydrochlorin from precorrin-2: step 1/1. Multifunctional enzyme that catalyzes the SAM-dependent methylations of uroporphyrinogen III at position C-2 and C-7 to form precorrin-2 via precorrin-1. Then it catalyzes the NAD-dependent ring dehydrogenation of precorrin-2 to yield sirohydrochlorin. Finally, it catalyzes the ferrochelation of sirohydrochlorin to yield siroheme. This Gluconobacter oxydans (strain 621H) (Gluconobacter suboxydans) protein is Siroheme synthase.